The following is a 76-amino-acid chain: Small ribosomal subunit protein bS21A (76 aa).

Positions 35–52 (HYEKPSEKRAREKAEAVR) are enriched in basic and acidic residues. The tract at residues 35–76 (HYEKPSEKRAREKAEAVRRARKLARKRAQREGLVSGRPAAAR) is disordered. Over residues 53–62 (RARKLARKRA) the composition is skewed to basic residues.

This sequence belongs to the bacterial ribosomal protein bS21 family.

In Chelativorans sp. (strain BNC1), this protein is Small ribosomal subunit protein bS21A.